Reading from the N-terminus, the 315-residue chain is Prephenate dehydratase (315 aa).

The Prephenate dehydratase domain maps to Val7–Ala190. The 80-residue stretch at Ser204 to Asn283 folds into the ACT domain.

It catalyses the reaction prephenate + H(+) = 3-phenylpyruvate + CO2 + H2O. The protein operates within amino-acid biosynthesis; L-phenylalanine biosynthesis; phenylpyruvate from prephenate: step 1/1. The chain is Prephenate dehydratase (pheA) from Corynebacterium glutamicum (strain ATCC 13032 / DSM 20300 / JCM 1318 / BCRC 11384 / CCUG 27702 / LMG 3730 / NBRC 12168 / NCIMB 10025 / NRRL B-2784 / 534).